The primary structure comprises 515 residues: Maturase K (515 aa).

This sequence belongs to the intron maturase 2 family. MatK subfamily.

Its subcellular location is the plastid. The protein localises to the chloroplast. In terms of biological role, usually encoded in the trnK tRNA gene intron. Probably assists in splicing its own and other chloroplast group II introns. This is Maturase K from Cedrus deodara (Deodar cedar).